The following is a 269-amino-acid chain: Tungstate-binding protein TupA (269 aa).

The signal sequence occupies residues 1-17; sequence MKKIISLALALALSASA.

As to quaternary structure, the complex is composed of two ATP-binding proteins (TupC), two transmembrane proteins (TupB) and a solute-binding protein (TupA).

Its subcellular location is the periplasm. Its function is as follows. Part of an ABC transporter complex involved in ultra-high affinity tungstate uptake. Specifically binds tungstate. This Campylobacter jejuni subsp. jejuni serotype O:2 (strain ATCC 700819 / NCTC 11168) protein is Tungstate-binding protein TupA.